The chain runs to 416 residues: Serine hydroxymethyltransferase (416 aa).

Residues L117 and 121-123 (GHL) contribute to the (6S)-5,6,7,8-tetrahydrofolate site. N6-(pyridoxal phosphate)lysine is present on K225. 351–353 (SPF) contacts (6S)-5,6,7,8-tetrahydrofolate.

This sequence belongs to the SHMT family. In terms of assembly, homodimer. The cofactor is pyridoxal 5'-phosphate.

It is found in the cytoplasm. It catalyses the reaction (6R)-5,10-methylene-5,6,7,8-tetrahydrofolate + glycine + H2O = (6S)-5,6,7,8-tetrahydrofolate + L-serine. The protein operates within one-carbon metabolism; tetrahydrofolate interconversion. It functions in the pathway amino-acid biosynthesis; glycine biosynthesis; glycine from L-serine: step 1/1. Functionally, catalyzes the reversible interconversion of serine and glycine with tetrahydrofolate (THF) serving as the one-carbon carrier. This reaction serves as the major source of one-carbon groups required for the biosynthesis of purines, thymidylate, methionine, and other important biomolecules. Also exhibits THF-independent aldolase activity toward beta-hydroxyamino acids, producing glycine and aldehydes, via a retro-aldol mechanism. The polypeptide is Serine hydroxymethyltransferase (Blochmanniella pennsylvanica (strain BPEN)).